Reading from the N-terminus, the 155-residue chain is UPF0178 protein Amet_2995 (155 aa).

The protein belongs to the UPF0178 family.

This Alkaliphilus metalliredigens (strain QYMF) protein is UPF0178 protein Amet_2995.